The sequence spans 111 residues: MATYEQVKDVPNHPDVYLIDVRRKEELQQTGFIPASINIPLDELDKALNLDGSAFKNKYGRSKPEKQSPIIFTCRSGNRVLEAEKIAKSQGYSNVVIYKGSWNEWAQKEGL.

The 99-residue stretch at Asn12–Gly110 folds into the Rhodanese domain.

The polypeptide is Rhodanese domain-containing protein CG4456 (Drosophila melanogaster (Fruit fly)).